We begin with the raw amino-acid sequence, 271 residues long: Formamidopyrimidine-DNA glycosylase (271 aa).

The Schiff-base intermediate with DNA role is filled by Pro-2. The active-site Proton donor is Glu-3. Catalysis depends on Lys-57, which acts as the Proton donor; for beta-elimination activity. The DNA site is built by His-90, Arg-109, and Lys-151. The FPG-type zinc-finger motif lies at 236-270 (HVYGRGGETCTECGHLLSEIRLGQRTTVFCSLCQT). The active-site Proton donor; for delta-elimination activity is the Arg-260.

This sequence belongs to the FPG family. As to quaternary structure, monomer. Zn(2+) serves as cofactor.

The enzyme catalyses Hydrolysis of DNA containing ring-opened 7-methylguanine residues, releasing 2,6-diamino-4-hydroxy-5-(N-methyl)formamidopyrimidine.. It carries out the reaction 2'-deoxyribonucleotide-(2'-deoxyribose 5'-phosphate)-2'-deoxyribonucleotide-DNA = a 3'-end 2'-deoxyribonucleotide-(2,3-dehydro-2,3-deoxyribose 5'-phosphate)-DNA + a 5'-end 5'-phospho-2'-deoxyribonucleoside-DNA + H(+). In terms of biological role, involved in base excision repair of DNA damaged by oxidation or by mutagenic agents. Acts as a DNA glycosylase that recognizes and removes damaged bases. Has a preference for oxidized purines, such as 7,8-dihydro-8-oxoguanine (8-oxoG). Has AP (apurinic/apyrimidinic) lyase activity and introduces nicks in the DNA strand. Cleaves the DNA backbone by beta-delta elimination to generate a single-strand break at the site of the removed base with both 3'- and 5'-phosphates. This chain is Formamidopyrimidine-DNA glycosylase, found in Shewanella amazonensis (strain ATCC BAA-1098 / SB2B).